A 130-amino-acid polypeptide reads, in one-letter code: Anti-adapter protein IraD (130 aa).

The protein belongs to the GpW/Gp25 family. IraD subfamily. As to quaternary structure, interacts with RssB.

The protein resides in the cytoplasm. Functionally, inhibits RpoS proteolysis by regulating RssB activity, thereby increasing the stability of the sigma stress factor RpoS during oxidative stress. Its effect on RpoS stability is due to its interaction with RssB, which probably blocks the interaction of RssB with RpoS, and the consequent delivery of the RssB-RpoS complex to the ClpXP protein degradation pathway. This chain is Anti-adapter protein IraD, found in Escherichia coli O45:K1 (strain S88 / ExPEC).